We begin with the raw amino-acid sequence, 227 residues long: ATP-dependent dethiobiotin synthetase BioD (227 aa).

13–18 contacts ATP; the sequence is DVGKTV. Mg(2+) is bound at residue T17. The active site involves K38. ATP-binding positions include D55, 116–119, 176–177, and 205–207; these read EGAG, NR, and PYI. Positions 55 and 116 each coordinate Mg(2+).

It belongs to the dethiobiotin synthetase family. In terms of assembly, homodimer. Mg(2+) serves as cofactor.

It is found in the cytoplasm. It catalyses the reaction (7R,8S)-7,8-diammoniononanoate + CO2 + ATP = (4R,5S)-dethiobiotin + ADP + phosphate + 3 H(+). It participates in cofactor biosynthesis; biotin biosynthesis; biotin from 7,8-diaminononanoate: step 1/2. Its function is as follows. Catalyzes a mechanistically unusual reaction, the ATP-dependent insertion of CO2 between the N7 and N8 nitrogen atoms of 7,8-diaminopelargonic acid (DAPA, also called 7,8-diammoniononanoate) to form a ureido ring. This is ATP-dependent dethiobiotin synthetase BioD from Vibrio campbellii (strain ATCC BAA-1116).